The chain runs to 651 residues: Probable inactive purple acid phosphatase 9 (651 aa).

Residues 1-20 (MIAAVYTLFFFFLLISSVYS) form the signal peptide. Residues N32, N96, and N202 are each glycosylated (N-linked (GlcNAc...) asparagine). Fe cation-binding residues include D305 and Y308. Residue D305 coordinates Zn(2+). N338 lines the Zn(2+) pocket. N338 lines the substrate pocket. 2 N-linked (GlcNAc...) asparagine glycosylation sites follow: N378 and N432. H444 is a binding site for Zn(2+). A glycan (N-linked (GlcNAc...) asparagine) is linked at N475. H483 provides a ligand contact to Zn(2+). 483–485 (HVH) serves as a coordination point for substrate. H485 is a binding site for Fe cation. N495 and N640 each carry an N-linked (GlcNAc...) asparagine glycan.

Belongs to the metallophosphoesterase superfamily. Purple acid phosphatase family. Homodimer. Fe cation serves as cofactor. Requires Zn(2+) as cofactor. As to expression, expressed in roots, stems, leaves, flowers and siliques.

The protein resides in the secreted. The sequence is that of Probable inactive purple acid phosphatase 9 (PAP9) from Arabidopsis thaliana (Mouse-ear cress).